The primary structure comprises 522 residues: Golgin subfamily A member 6-like protein 10 (522 aa).

Positions 1-11 are enriched in pro residues; the sequence is MWPQPRLPPHP. A disordered region spans residues 1-77; it reads MWPQPRLPPH…DSATGIYGEG (77 aa). The span at 51–62 shows a compositional bias: polar residues; it reads NGSSPDTATSGG. Residues 157–328 are a coiled coil; sequence SKVEQLQDET…RLCEQEKLPG (172 aa). The span at 439-452 shows a compositional bias: basic and acidic residues; the sequence is KELEKSGGAEEPRG. Residues 439-503 are disordered; sequence KELEKSGGAE…TGEAAGGAEE (65 aa). Low complexity-rich tracts occupy residues 456–471 and 489–503; these read AAAA…PQGA and GEAV…GAEE.

Belongs to the GOLGA6 family.

The sequence is that of Golgin subfamily A member 6-like protein 10 from Homo sapiens (Human).